Here is a 200-residue protein sequence, read N- to C-terminus: Holliday junction resolvase RecU (200 aa).

Mg(2+) is bound by residues Thr82, Asp84, Glu97, and Gln116.

This sequence belongs to the RecU family. Mg(2+) serves as cofactor.

It localises to the cytoplasm. It carries out the reaction Endonucleolytic cleavage at a junction such as a reciprocal single-stranded crossover between two homologous DNA duplexes (Holliday junction).. Endonuclease that resolves Holliday junction intermediates in genetic recombination. Cleaves mobile four-strand junctions by introducing symmetrical nicks in paired strands. Promotes annealing of linear ssDNA with homologous dsDNA. Required for DNA repair, homologous recombination and chromosome segregation. The sequence is that of Holliday junction resolvase RecU from Streptococcus sanguinis (strain SK36).